Reading from the N-terminus, the 191-residue chain is MEYLIVALSSYLLGSIPFGFILTKIFLKKDIRDIGSGNIGATNALRTGNKTLGYATLLLDITKAVLPVLYVKFNYPDYIFIASLSAFLGHVFPIWLKFKGGKGVATYVGILFSINIFLGLVFIISWAVTFLISKYSSLSSLVGSLMVPMYLIVFENYNSIFFIIMFVLIFYTHRENVKRLKNKEETKTKIY.

5 helical membrane passes run 3–23 (YLIV…FILT), 51–71 (TLGY…VLYV), 78–98 (YIFI…WLKF), 108–128 (VGIL…SWAV), and 150–170 (YLIV…VLIF).

It belongs to the PlsY family. As to quaternary structure, probably interacts with PlsX.

It localises to the cell inner membrane. The enzyme catalyses an acyl phosphate + sn-glycerol 3-phosphate = a 1-acyl-sn-glycero-3-phosphate + phosphate. Its pathway is lipid metabolism; phospholipid metabolism. Functionally, catalyzes the transfer of an acyl group from acyl-phosphate (acyl-PO(4)) to glycerol-3-phosphate (G3P) to form lysophosphatidic acid (LPA). This enzyme utilizes acyl-phosphate as fatty acyl donor, but not acyl-CoA or acyl-ACP. The sequence is that of Glycerol-3-phosphate acyltransferase from Pelagibacter ubique (strain HTCC1062).